Consider the following 239-residue polypeptide: Ribonuclease PH (239 aa).

Residues R86 and 124–126 (GTR) each bind phosphate.

The protein belongs to the RNase PH family. As to quaternary structure, homohexameric ring arranged as a trimer of dimers.

It catalyses the reaction tRNA(n+1) + phosphate = tRNA(n) + a ribonucleoside 5'-diphosphate. Phosphorolytic 3'-5' exoribonuclease that plays an important role in tRNA 3'-end maturation. Removes nucleotide residues following the 3'-CCA terminus of tRNAs; can also add nucleotides to the ends of RNA molecules by using nucleoside diphosphates as substrates, but this may not be physiologically important. Probably plays a role in initiation of 16S rRNA degradation (leading to ribosome degradation) during starvation. The chain is Ribonuclease PH from Sodalis glossinidius (strain morsitans).